A 559-amino-acid polypeptide reads, in one-letter code: Putative ankyrin repeat protein RBE_0902 (559 aa).

ANK repeat units follow at residues 11–40 (DGWTVLTFAAAYGLEKVCEALIPKMSEQAI), 46–75 (DGNTALTWAAYTGLEKVCEALIPKMSDQAI), 81–110 (DGNTALSIARNKGFKNMCDLLTTIEATKQN), 158–189 (DDWTALTFAAAYGLEKVCELLIPKMTDQVINH), 228–257 (NNDTVLTLAANKSLGKICEILIPKMTDQAI), 263–292 (DGNTALIAAASSHLEKICEALIPKMSDQAI), 298–327 (YGNTALIAAASSGLEKVCETLIPKMTEQAI), 333–364 (QCDTALIFAVRNSLKKVCEVLIPKMSYEAINC), 372–402 (FGFTAFTWVTLNGDKKICELLIPKTSPEVII), and 524–554 (IDNNEIHISCLTTEIIAHIVEYLENEKWGLE).

The chain is Putative ankyrin repeat protein RBE_0902 from Rickettsia bellii (strain RML369-C).